A 335-amino-acid chain; its full sequence is 2,4-dienoyl-CoA reductase [(3E)-enoyl-CoA-producing], mitochondrial (335 aa).

The transit peptide at 1–34 directs the protein to the mitochondrion; that stretch reads MKLPARVFFTLGSRLPCGLAPRRFFSYGTKILYQ. 2 positions are modified to N6-acetyllysine; alternate: K42 and K49. Residues K42 and K49 each carry the N6-succinyllysine; alternate modification. 66 to 71 contacts NADP(+); sequence GGGTGL. Position 69 is a phosphothreonine (T69). Residue K73 is modified to N6-succinyllysine. NADP(+) is bound at residue R91. R91 lines the substrate pocket. An N6-acetyllysine; alternate modification is found at K97. The residue at position 97 (K97) is an N6-succinyllysine; alternate. D117 contacts NADP(+). Substrate is bound by residues R119, F149, and S157. Y199 functions as the Proton acceptor in the catalytic mechanism. K214 is an NADP(+) binding site. Residue K230 is modified to N6-acetyllysine. Position 240–243 (240–243) interacts with NADP(+); it reads PGPI. Residue K244 is modified to N6-acetyllysine; alternate. N6-succinyllysine; alternate is present on K244. R251 is a substrate binding site. Residues K260 and K319 each carry the N6-acetyllysine; alternate modification. N6-succinyllysine; alternate occurs at positions 260 and 319.

Belongs to the short-chain dehydrogenases/reductases (SDR) family. 2,4-dienoyl-CoA reductase subfamily. In terms of assembly, homotetramer. Heart = liver = pancreas &gt; kidney &gt;&gt; skeletal muscle = lung.

The protein resides in the mitochondrion. The catalysed reaction is a (2E,4E)-dienoyl-CoA + NADPH + H(+) = a 4,5-saturated-(3E)-enoyl-CoA + NADP(+). It carries out the reaction a (2E,4Z)-dienoyl-CoA + NADPH + H(+) = a 4,5-saturated-(3E)-enoyl-CoA + NADP(+). The enzyme catalyses (2E,4E)-hexadienoyl-CoA + NADPH + H(+) = (3E)-hexenoyl-CoA + NADP(+). In terms of biological role, auxiliary enzyme of beta-oxidation. It participates in the metabolism of unsaturated fatty enoyl-CoA esters having double bonds in both even- and odd-numbered positions in mitochondria. Catalyzes the NADP-dependent reduction of 2,4-dienoyl-CoA to yield trans-3-enoyl-CoA. This chain is 2,4-dienoyl-CoA reductase [(3E)-enoyl-CoA-producing], mitochondrial (DECR1), found in Homo sapiens (Human).